A 191-amino-acid polypeptide reads, in one-letter code: dCTP deaminase, dUMP-forming (191 aa).

DCTP contacts are provided by residues 101-106 (KSSLGR), D119, 127-129 (TLE), Q148, Y162, and Q174. The active-site Proton donor/acceptor is E129. The interval 169–191 (NRYQGQRGPTASRSHLNFHRTRI) is disordered. Over residues 171 to 183 (YQGQRGPTASRSH) the composition is skewed to polar residues.

Belongs to the dCTP deaminase family. Homotrimer.

It carries out the reaction dCTP + 2 H2O = dUMP + NH4(+) + diphosphate. The protein operates within pyrimidine metabolism; dUMP biosynthesis; dUMP from dCTP: step 1/1. Functionally, bifunctional enzyme that catalyzes both the deamination of dCTP to dUTP and the hydrolysis of dUTP to dUMP without releasing the toxic dUTP intermediate. In Pseudarthrobacter chlorophenolicus (strain ATCC 700700 / DSM 12829 / CIP 107037 / JCM 12360 / KCTC 9906 / NCIMB 13794 / A6) (Arthrobacter chlorophenolicus), this protein is dCTP deaminase, dUMP-forming.